A 102-amino-acid chain; its full sequence is MKKRHREGCDMPGPWSTLRSHRGHHCPHLHPVLRRPTLTDVEGCLQCLDVCGHPRHAVDAHLLHASALDLLHALAHDVGHLGPLSPAGGGNVLSVLTALLGP.

This is an uncharacterized protein from Homo sapiens (Human).